Reading from the N-terminus, the 44-residue chain is Photosystem I reaction center subunit IX (44 aa).

A helical transmembrane segment spans residues 9–29 (FMRSAPIVAAIWISLTAGIII).

Belongs to the PsaJ family.

It localises to the cellular thylakoid membrane. Its function is as follows. May help in the organization of the PsaE and PsaF subunits. This Prochlorococcus marinus (strain MIT 9515) protein is Photosystem I reaction center subunit IX.